The chain runs to 141 residues: Large ribosomal subunit protein uL11 (141 aa).

The protein belongs to the universal ribosomal protein uL11 family. As to quaternary structure, part of the ribosomal stalk of the 50S ribosomal subunit. Interacts with L10 and the large rRNA to form the base of the stalk. L10 forms an elongated spine to which L12 dimers bind in a sequential fashion forming a multimeric L10(L12)X complex. Post-translationally, one or more lysine residues are methylated.

In terms of biological role, forms part of the ribosomal stalk which helps the ribosome interact with GTP-bound translation factors. This is Large ribosomal subunit protein uL11 from Streptococcus suis (strain 05ZYH33).